The sequence spans 217 residues: Flagellar L-ring protein 2 (217 aa).

The signal sequence occupies residues 1–15; that stretch reads MRILLALTWLAWLGA. Cys16 is lipidated: N-palmitoyl cysteine. Residue Cys16 is the site of S-diacylglycerol cysteine attachment.

The protein belongs to the FlgH family. As to quaternary structure, the basal body constitutes a major portion of the flagellar organelle and consists of four rings (L,P,S, and M) mounted on a central rod.

It is found in the cell outer membrane. The protein localises to the bacterial flagellum basal body. Functionally, assembles around the rod to form the L-ring and probably protects the motor/basal body from shearing forces during rotation. The protein is Flagellar L-ring protein 2 of Burkholderia thailandensis (strain ATCC 700388 / DSM 13276 / CCUG 48851 / CIP 106301 / E264).